The primary structure comprises 241 residues: Transmembrane protein 176A (241 aa).

Ser-38 carries the phosphoserine modification. Transmembrane regions (helical) follow at residues 65–85, 93–113, 127–147, and 193–213; these read WVMQIVLGLLSGVLGGFLYIF, SGAPIWTGAVAVLAGAVAFIY, LLALAAFSTATAATIIGAGRF, and LFISINAMLLGVWVLLLLASL.

Belongs to the TMEM176 family. In terms of assembly, interacts with MCOLN2.

The protein localises to the membrane. This chain is Transmembrane protein 176A (TMEM176A), found in Bos taurus (Bovine).